Reading from the N-terminus, the 393-residue chain is Branched-chain-amino-acid aminotransferase, mitochondrial (393 aa).

The N-terminal 27 residues, 1 to 27, are a transit peptide targeting the mitochondrion; it reads MAAATLGQVWARKLLPVPWLLCGSKRC. Residue Tyr169 participates in substrate binding. Lys230 is subject to N6-(pyridoxal phosphate)lysine. Lys322 is subject to N6-acetyllysine.

The protein belongs to the class-IV pyridoxal-phosphate-dependent aminotransferase family. As to quaternary structure, homodimer. The cofactor is pyridoxal 5'-phosphate.

Its subcellular location is the mitochondrion. The catalysed reaction is L-leucine + 2-oxoglutarate = 4-methyl-2-oxopentanoate + L-glutamate. The enzyme catalyses L-isoleucine + 2-oxoglutarate = (S)-3-methyl-2-oxopentanoate + L-glutamate. It catalyses the reaction L-valine + 2-oxoglutarate = 3-methyl-2-oxobutanoate + L-glutamate. Catalyzes the first reaction in the catabolism of the essential branched chain amino acids leucine, isoleucine, and valine. May also function as a transporter of branched chain alpha-keto acids. The polypeptide is Branched-chain-amino-acid aminotransferase, mitochondrial (Bcat2) (Mus musculus (Mouse)).